Here is a 465-residue protein sequence, read N- to C-terminus: MKHIVKHIHFVGIGGAGMSGIAEVLVNLGYQVSGSDLARNAVTERLEALGARVSIGHDAANIEGANAVVVSTAVRSDNPEVLAARRLRVPIVPRAVMLAELMRLKQGIAIAGTHGKTTTTSLVASVLAAGGLDPTFVIGGRLTSAGANARLGTGDFIVAEADESDASFLNLYPVIEVITNIDADHMDTYGHDFARLKQAFIEFTQRLPFYGSAVVCIDDANVRQIVPLISKPVVRYGFAADAQVRAENVEARDGRMHFTVRREGREPLPVVLNLPGLHNVQNALAAIAIATDLDVADAAIQQALAEFNGVGRRFQRYGEIAAAGGGAYTLIDDYGHHPVEMAATIAAARGAFPGRRLVLAFQPHRYTRTRDCFDDFVNVLSTVDALVLTEVYAAGEAPISTANGDALSRALRAAGKVEPVFVATVDEVPDALAKLARDGDVVITMGAGSIGGVPGKLAQDTQQKG.

112 to 118 contributes to the ATP binding site; that stretch reads GTHGKTT.

The protein belongs to the MurCDEF family.

The protein resides in the cytoplasm. It carries out the reaction UDP-N-acetyl-alpha-D-muramate + L-alanine + ATP = UDP-N-acetyl-alpha-D-muramoyl-L-alanine + ADP + phosphate + H(+). Its pathway is cell wall biogenesis; peptidoglycan biosynthesis. Functionally, cell wall formation. The polypeptide is UDP-N-acetylmuramate--L-alanine ligase (Burkholderia pseudomallei (strain 1106a)).